We begin with the raw amino-acid sequence, 464 residues long: Protein FAM90A13 (464 aa).

Disordered regions lie at residues 1–42 (MMAR…DPRL), 69–389 (VPAT…HDGA), and 411–437 (APSF…SEAP). 2 stretches are compositionally biased toward basic and acidic residues: residues 74-89 (GKKE…KPRG) and 97-114 (NKDK…DPQR). Residues 180–197 (LASLSPLRKASLSSSSSL) show a composition bias toward low complexity.

It belongs to the FAM90 family.

This is Protein FAM90A13 from Homo sapiens (Human).